A 469-amino-acid chain; its full sequence is Neuraminidase (469 aa).

Topologically, residues 1-9 (MNPNQKIIT) are intravirion. The chain crosses the membrane as a helical span at residues 10 to 30 (IGSVSLTIATVCFLMQIAILV). The interval 11–33 (GSVSLTIATVCFLMQIAILVTTV) is involved in apical transport and lipid raft association. Residues 31 to 469 (TTVTLHFKQH…DGANINFMPI (439 aa)) are Virion surface-facing. Positions 36–88 (HFKQHECDSPASNQVMPCEPIIIERNITEIVYLNNTTIEKEICPEVVEYRNWS) are hypervariable stalk region. N-linked (GlcNAc...) asparagine; by host glycans are attached at residues Asn-61, Asn-69, Asn-70, and Asn-86. The head of neuraminidase stretch occupies residues 91 to 469 (QCQITGFAPF…DGANINFMPI (379 aa)). Cystine bridges form between Cys-92–Cys-417, Cys-124–Cys-129, Cys-183–Cys-230, Cys-232–Cys-237, Cys-278–Cys-291, Cys-280–Cys-289, Cys-318–Cys-337, and Cys-421–Cys-447. Arg-118 lines the substrate pocket. An N-linked (GlcNAc...) asparagine; by host glycan is attached at Asn-146. Catalysis depends on Asp-151, which acts as the Proton donor/acceptor. Arg-152 contributes to the substrate binding site. N-linked (GlcNAc...) asparagine; by host glycans are attached at residues Asn-200 and Asn-234. 276–277 (EE) lines the substrate pocket. Arg-292 is a substrate binding site. Ca(2+) is bound by residues Asp-293, Gly-297, and Asp-324. Positions 324–350 (DTPRNDDRSSNSNCRNPNNERGNPGVK) are disordered. A compositionally biased stretch (low complexity) spans 333–347 (SNSNCRNPNNERGNP). Arg-371 lines the substrate pocket. An N-linked (GlcNAc...) asparagine; by host glycan is attached at Asn-402. Tyr-406 (nucleophile) is an active-site residue.

The protein belongs to the glycosyl hydrolase 34 family. Homotetramer. Requires Ca(2+) as cofactor. Post-translationally, N-glycosylated.

The protein localises to the virion membrane. It is found in the host apical cell membrane. It catalyses the reaction Hydrolysis of alpha-(2-&gt;3)-, alpha-(2-&gt;6)-, alpha-(2-&gt;8)- glycosidic linkages of terminal sialic acid residues in oligosaccharides, glycoproteins, glycolipids, colominic acid and synthetic substrates.. Inhibited by the neuraminidase inhibitors zanamivir (Relenza) and oseltamivir (Tamiflu). These drugs interfere with the release of progeny virus from infected cells and are effective against all influenza strains. Resistance to neuraminidase inhibitors is quite rare. Its function is as follows. Catalyzes the removal of terminal sialic acid residues from viral and cellular glycoconjugates. Cleaves off the terminal sialic acids on the glycosylated HA during virus budding to facilitate virus release. Additionally helps virus spread through the circulation by further removing sialic acids from the cell surface. These cleavages prevent self-aggregation and ensure the efficient spread of the progeny virus from cell to cell. Otherwise, infection would be limited to one round of replication. Described as a receptor-destroying enzyme because it cleaves a terminal sialic acid from the cellular receptors. May facilitate viral invasion of the upper airways by cleaving the sialic acid moieties on the mucin of the airway epithelial cells. Likely to plays a role in the budding process through its association with lipid rafts during intracellular transport. May additionally display a raft-association independent effect on budding. Plays a role in the determination of host range restriction on replication and virulence. Sialidase activity in late endosome/lysosome traffic seems to enhance virus replication. This Aves (Human) protein is Neuraminidase.